The sequence spans 346 residues: Biotin synthase (346 aa).

Residues 38–256 (RQVQVSTLLS…IAIARIMMPT (219 aa)) enclose the Radical SAM core domain. [4Fe-4S] cluster is bound by residues Cys-53, Cys-57, and Cys-60. [2Fe-2S] cluster is bound by residues Cys-97, Cys-128, Cys-188, and Arg-260.

It belongs to the radical SAM superfamily. Biotin synthase family. In terms of assembly, homodimer. Requires [4Fe-4S] cluster as cofactor. The cofactor is [2Fe-2S] cluster.

The catalysed reaction is (4R,5S)-dethiobiotin + (sulfur carrier)-SH + 2 reduced [2Fe-2S]-[ferredoxin] + 2 S-adenosyl-L-methionine = (sulfur carrier)-H + biotin + 2 5'-deoxyadenosine + 2 L-methionine + 2 oxidized [2Fe-2S]-[ferredoxin]. The protein operates within cofactor biosynthesis; biotin biosynthesis; biotin from 7,8-diaminononanoate: step 2/2. In terms of biological role, catalyzes the conversion of dethiobiotin (DTB) to biotin by the insertion of a sulfur atom into dethiobiotin via a radical-based mechanism. This Klebsiella pneumoniae (strain 342) protein is Biotin synthase.